We begin with the raw amino-acid sequence, 217 residues long: LexA repressor (217 aa).

A DNA-binding region (H-T-H motif) is located at residues 26–46 (FEEMKLALDLKSKSGIHRLIK). Active-site for autocatalytic cleavage activity residues include serine 138 and lysine 176.

This sequence belongs to the peptidase S24 family. In terms of assembly, homodimer.

The catalysed reaction is Hydrolysis of Ala-|-Gly bond in repressor LexA.. Its function is as follows. Represses a number of genes involved in the response to DNA damage (SOS response), including recA and lexA. In the presence of single-stranded DNA, RecA interacts with LexA causing an autocatalytic cleavage which disrupts the DNA-binding part of LexA, leading to derepression of the SOS regulon and eventually DNA repair. The sequence is that of LexA repressor from Zymomonas mobilis subsp. mobilis (strain ATCC 31821 / ZM4 / CP4).